Here is a 166-residue protein sequence, read N- to C-terminus: NAD(P)H-quinone oxidoreductase subunit I, chloroplastic (166 aa).

4Fe-4S ferredoxin-type domains are found at residues Gly-55 to Lys-84 and Leu-95 to Glu-124. Positions 64, 67, 70, 74, 104, 107, 110, and 114 each coordinate [4Fe-4S] cluster.

The protein belongs to the complex I 23 kDa subunit family. In terms of assembly, NDH is composed of at least 16 different subunits, 5 of which are encoded in the nucleus. [4Fe-4S] cluster is required as a cofactor.

The protein localises to the plastid. The protein resides in the chloroplast thylakoid membrane. It carries out the reaction a plastoquinone + NADH + (n+1) H(+)(in) = a plastoquinol + NAD(+) + n H(+)(out). The catalysed reaction is a plastoquinone + NADPH + (n+1) H(+)(in) = a plastoquinol + NADP(+) + n H(+)(out). In terms of biological role, NDH shuttles electrons from NAD(P)H:plastoquinone, via FMN and iron-sulfur (Fe-S) centers, to quinones in the photosynthetic chain and possibly in a chloroplast respiratory chain. The immediate electron acceptor for the enzyme in this species is believed to be plastoquinone. Couples the redox reaction to proton translocation, and thus conserves the redox energy in a proton gradient. This chain is NAD(P)H-quinone oxidoreductase subunit I, chloroplastic, found in Oxypappus scaber.